The sequence spans 58 residues: DNA-binding protein (58 aa).

Basic residues-rich tracts occupy residues 1–19 (MVRR…RSRS) and 28–58 (SRYR…NQYI). A disordered region spans residues 1–58 (MVRRRRSRSPYRRRSRSRSRSGSDRSRSRYRSRSRSRSRSRSRARSRSPYHHHINQYI).

In terms of processing, probably phosphorylated in infected cells.

Its subcellular location is the virion. In terms of biological role, thought to be responsible for DNA condensation during packaging of the nucleocapsids. This Cryptophlebia leucotreta granulosis virus (ClGV) protein is DNA-binding protein (P7.3).